The chain runs to 244 residues: 1-(5-phosphoribosyl)-5-[(5-phosphoribosylamino)methylideneamino] imidazole-4-carboxamide isomerase (244 aa).

D8 acts as the Proton acceptor in catalysis. D129 functions as the Proton donor in the catalytic mechanism.

It belongs to the HisA/HisF family.

It localises to the cytoplasm. The enzyme catalyses 1-(5-phospho-beta-D-ribosyl)-5-[(5-phospho-beta-D-ribosylamino)methylideneamino]imidazole-4-carboxamide = 5-[(5-phospho-1-deoxy-D-ribulos-1-ylimino)methylamino]-1-(5-phospho-beta-D-ribosyl)imidazole-4-carboxamide. The protein operates within amino-acid biosynthesis; L-histidine biosynthesis; L-histidine from 5-phospho-alpha-D-ribose 1-diphosphate: step 4/9. The chain is 1-(5-phosphoribosyl)-5-[(5-phosphoribosylamino)methylideneamino] imidazole-4-carboxamide isomerase from Chelativorans sp. (strain BNC1).